Here is a 319-residue protein sequence, read N- to C-terminus: NADH-quinone oxidoreductase subunit H 1 (319 aa).

Helical transmembrane passes span 8–28, 74–94, 107–127, 147–167, 179–199, 230–250, 258–278, and 297–317; these read LFNIFGILGTLLTLAALLIWI, LVFILAPTVVVIATLLAFAVI, IGLLFFLAMSSLSVYSVVLGG, LSYEVFMGLSLMGVVMLAGTF, MWFCIPQFLGLVVFLIAGIAE, FFVGEYLAILLISALIVTLFF, LPPLVWFFIKFSFFVLFFILL, and LMLPLALLNLVITGAVVLALD.

This sequence belongs to the complex I subunit 1 family. As to quaternary structure, NDH-1 is composed of 14 different subunits. Subunits NuoA, H, J, K, L, M, N constitute the membrane sector of the complex.

Its subcellular location is the cell inner membrane. The catalysed reaction is a quinone + NADH + 5 H(+)(in) = a quinol + NAD(+) + 4 H(+)(out). Its function is as follows. NDH-1 shuttles electrons from NADH, via FMN and iron-sulfur (Fe-S) centers, to quinones in the respiratory chain. The immediate electron acceptor for the enzyme in this species is believed to be ubiquinone. Couples the redox reaction to proton translocation (for every two electrons transferred, four hydrogen ions are translocated across the cytoplasmic membrane), and thus conserves the redox energy in a proton gradient. This subunit may bind ubiquinone. The chain is NADH-quinone oxidoreductase subunit H 1 from Nitrosococcus oceani (strain ATCC 19707 / BCRC 17464 / JCM 30415 / NCIMB 11848 / C-107).